The primary structure comprises 46 residues: Aspartate aminotransferase 1 (46 aa).

It belongs to the class-I pyridoxal-phosphate-dependent aminotransferase family. As to quaternary structure, homodimer. The cofactor is pyridoxal 5'-phosphate.

The catalysed reaction is L-aspartate + 2-oxoglutarate = oxaloacetate + L-glutamate. Its function is as follows. Important for the metabolism of amino acids and Krebs-cycle related organic acids. In plants, it is involved in nitrogen metabolism and in aspects of carbon and energy metabolism. The sequence is that of Aspartate aminotransferase 1 from Pseudotsuga menziesii (Douglas-fir).